Consider the following 246-residue polypeptide: Acetoacetate decarboxylase (246 aa).

The active-site Schiff-base intermediate with acetoacetate is the Lys116.

Belongs to the ADC family.

It carries out the reaction acetoacetate + H(+) = acetone + CO2. Functionally, catalyzes the conversion of acetoacetate to acetone and carbon dioxide. In Burkholderia ambifaria (strain MC40-6), this protein is Acetoacetate decarboxylase.